The primary structure comprises 231 residues: NADH-ubiquinone oxidoreductase chain 4 (231 aa).

6 helical membrane-spanning segments follow: residues 1–21 (PIAG…YGII), 34–54 (MFLP…LTCL), 63–85 (IAYS…TPWG), 89–111 (AMAL…NTTY), 128–148 (ILPM…ATPP), and 156–176 (LLIM…LGLS).

The protein belongs to the complex I subunit 4 family.

It is found in the mitochondrion membrane. The enzyme catalyses a ubiquinone + NADH + 5 H(+)(in) = a ubiquinol + NAD(+) + 4 H(+)(out). Core subunit of the mitochondrial membrane respiratory chain NADH dehydrogenase (Complex I) that is believed to belong to the minimal assembly required for catalysis. Complex I functions in the transfer of electrons from NADH to the respiratory chain. The immediate electron acceptor for the enzyme is believed to be ubiquinone. The chain is NADH-ubiquinone oxidoreductase chain 4 (MT-ND4) from Trimeresurus stejnegeri (Chinese green tree viper).